Here is a 582-residue protein sequence, read N- to C-terminus: La-related protein 7 (582 aa).

Met1 carries the N-acetylmethionine modification. Residues 1 to 27 are disordered; it reads METESGNQEKVMEEESTEKKKEVEKKK. The segment covering 10-25 has biased composition (basic and acidic residues); the sequence is KVMEEESTEKKKEVEK. The HTH La-type RNA-binding domain occupies 28 to 122; it reads RSRVKQVLAD…KPLGERPKDE (95 aa). The 79-residue stretch at 125–203 folds into the RRM domain; the sequence is RTVYVELLPK…PRKPGIFPKT (79 aa). Disordered stretches follow at residues 188-368 and 410-442; these read NPPE…ERHK and KSES…RTQE. The span at 219–228 shows a compositional bias: basic residues; that stretch reads KKKKKKKGRM. Residues 229 to 240 are compositionally biased toward basic and acidic residues; that stretch reads KKEDNIQAKEEN. A Glycyl lysine isopeptide (Lys-Gly) (interchain with G-Cter in SUMO2) cross-link involves residue Lys237. A Phosphothreonine modification is found at Thr257. 6 positions are modified to phosphoserine: Ser258, Ser261, Ser273, Ser298, Ser299, and Ser300. Over residues 316 to 335 the composition is skewed to basic and acidic residues; it reads IQKDIIKEASEASKENRDIE. Ser337 carries the post-translational modification Phosphoserine. A Phosphothreonine modification is found at Thr338. A Phosphoserine modification is found at Ser351. Residues 354-367 are compositionally biased toward basic residues; sequence KTKRKHKKKHKERH. Lys410 is covalently cross-linked (Glycyl lysine isopeptide (Lys-Gly) (interchain with G-Cter in SUMO2)). The segment covering 428–442 has biased composition (basic and acidic residues); the sequence is KNEKTANREECRTQE. The region spanning 450 to 563 is the xRRM domain; the sequence is QFVSGVIVKI…TEKLITKAEK (114 aa).

It belongs to the LARP7 family. In terms of assembly, core component of the 7SK RNP complex, at least composed of 7SK RNA, LARP7, MEPCE, HEXIM1 (or HEXIM2) and P-TEFb (composed of CDK9 and CCNT1/cyclin-T1). Interacts with METTL16. Interacts with RBM7; upon genotoxic stress this interaction is enhanced, triggering the release of inactive P-TEFb complex from the core, yielding to P-TEFb complex activation. Associates with box C/D small nucleolar ribonucleoprotein (snoRNP) complexes.

Its subcellular location is the nucleus. The protein resides in the nucleoplasm. Functionally, RNA-binding protein that specifically binds distinct small nuclear RNA (snRNAs) and regulates their processing and function. Specifically binds the 7SK snRNA (7SK RNA) and acts as a core component of the 7SK ribonucleoprotein (RNP) complex, thereby acting as a negative regulator of transcription elongation by RNA polymerase II. The 7SK RNP complex sequesters the positive transcription elongation factor b (P-TEFb) in a large inactive 7SK RNP complex preventing RNA polymerase II phosphorylation and subsequent transcriptional elongation. The 7SK RNP complex also promotes snRNA gene transcription by RNA polymerase II via interaction with the little elongation complex (LEC). LARP7 specifically binds to the highly conserved 3'-terminal U-rich stretch of 7SK RNA; on stimulation, remains associated with 7SK RNA, whereas P-TEFb is released from the complex. LARP7 also acts as a regulator of mRNA splicing fidelity by promoting U6 snRNA processing. Specifically binds U6 snRNAs and associates with a subset of box C/D RNP complexes: promotes U6 snRNA 2'-O-methylation by facilitating U6 snRNA loading into box C/D RNP complexes. U6 snRNA 2'-O-methylation is required for mRNA splicing fidelity. Binds U6 snRNAs with a 5'-CAGGG-3' sequence motif. U6 snRNA processing is required for spermatogenesis. The sequence is that of La-related protein 7 from Homo sapiens (Human).